A 136-amino-acid chain; its full sequence is Large ribosomal subunit protein uL13 (136 aa).

Belongs to the universal ribosomal protein uL13 family. As to quaternary structure, part of the 50S ribosomal subunit.

In terms of biological role, this protein is one of the early assembly proteins of the 50S ribosomal subunit, although it is not seen to bind rRNA by itself. It is important during the early stages of 50S assembly. This chain is Large ribosomal subunit protein uL13, found in Thermoplasma volcanium (strain ATCC 51530 / DSM 4299 / JCM 9571 / NBRC 15438 / GSS1).